The following is a 248-amino-acid chain: ATP synthase subunit a, chloroplastic (248 aa).

A run of 4 helical transmembrane segments spans residues 34–54 (LHGQ…IFAL), 95–115 (VPYI…GALI), 134–154 (INVT…AGIS), and 203–223 (VFAL…GLFA).

Belongs to the ATPase A chain family. F-type ATPases have 2 components, CF(1) - the catalytic core - and CF(0) - the membrane proton channel. CF(1) has five subunits: alpha(3), beta(3), gamma(1), delta(1), epsilon(1). CF(0) has four main subunits: a, b, b' and c.

The protein resides in the plastid. It localises to the chloroplast thylakoid membrane. Functionally, key component of the proton channel; it plays a direct role in the translocation of protons across the membrane. The chain is ATP synthase subunit a, chloroplastic from Guillardia theta (Cryptophyte).